The sequence spans 171 residues: Ribosome-binding factor A (171 aa).

Low complexity predominate over residues 120–132 (AALAAAAQPAGDP). The disordered stretch occupies residues 120–171 (AALAAAAQPAGDPDPYKKPVDHTDDWDEDDEDDRDGDDAVDALDAAADVPRL). Residues 133 to 142 (DPYKKPVDHT) show a composition bias toward basic and acidic residues. The segment covering 143 to 160 (DDWDEDDEDDRDGDDAVD) has biased composition (acidic residues). Over residues 161-171 (ALDAAADVPRL) the composition is skewed to low complexity.

This sequence belongs to the RbfA family. In terms of assembly, monomer. Binds 30S ribosomal subunits, but not 50S ribosomal subunits or 70S ribosomes.

It localises to the cytoplasm. In terms of biological role, one of several proteins that assist in the late maturation steps of the functional core of the 30S ribosomal subunit. Associates with free 30S ribosomal subunits (but not with 30S subunits that are part of 70S ribosomes or polysomes). Required for efficient processing of 16S rRNA. May interact with the 5'-terminal helix region of 16S rRNA. The protein is Ribosome-binding factor A of Kineococcus radiotolerans (strain ATCC BAA-149 / DSM 14245 / SRS30216).